The sequence spans 35 residues: Photosystem II reaction center protein T (35 aa).

The chain crosses the membrane as a helical span at residues 3–23; the sequence is ALVYTFLLVSTLGILFFAIFF.

It belongs to the PsbT family. PSII is composed of 1 copy each of membrane proteins PsbA, PsbB, PsbC, PsbD, PsbE, PsbF, PsbH, PsbI, PsbJ, PsbK, PsbL, PsbM, PsbT, PsbY, PsbZ, Psb30/Ycf12, at least 3 peripheral proteins of the oxygen-evolving complex and a large number of cofactors. It forms dimeric complexes.

The protein localises to the plastid. It is found in the chloroplast thylakoid membrane. Its function is as follows. Found at the monomer-monomer interface of the photosystem II (PS II) dimer, plays a role in assembly and dimerization of PSII. PSII is a light-driven water plastoquinone oxidoreductase, using light energy to abstract electrons from H(2)O, generating a proton gradient subsequently used for ATP formation. The protein is Photosystem II reaction center protein T of Gnetum gnemon (Spanish joint-fir).